We begin with the raw amino-acid sequence, 384 residues long: 8-amino-7-oxononanoate synthase (384 aa).

A substrate-binding site is contributed by Arg21. 108 to 109 (GF) is a binding site for pyridoxal 5'-phosphate. Residue His133 coordinates substrate. 3 residues coordinate pyridoxal 5'-phosphate: Ser179, His207, and Thr233. At Lys236 the chain carries N6-(pyridoxal phosphate)lysine. Position 352 (Thr352) interacts with substrate.

The protein belongs to the class-II pyridoxal-phosphate-dependent aminotransferase family. BioF subfamily. As to quaternary structure, homodimer. The cofactor is pyridoxal 5'-phosphate.

It carries out the reaction 6-carboxyhexanoyl-[ACP] + L-alanine + H(+) = (8S)-8-amino-7-oxononanoate + holo-[ACP] + CO2. It functions in the pathway cofactor biosynthesis; biotin biosynthesis. Functionally, catalyzes the decarboxylative condensation of pimeloyl-[acyl-carrier protein] and L-alanine to produce 8-amino-7-oxononanoate (AON), [acyl-carrier protein], and carbon dioxide. The sequence is that of 8-amino-7-oxononanoate synthase from Escherichia coli O17:K52:H18 (strain UMN026 / ExPEC).